Reading from the N-terminus, the 245-residue chain is DNA polymerase sliding clamp 2 (245 aa).

The protein belongs to the PCNA family. Forms homodimers with PCNA1, which then recruit PCNA3; does not form homotrimers. The heterodimers interact with RfcS homotetramers. Heterotrimer which circularizes head-to-tail (head is at N-terminus, tail is at C-terminus) to form a toroid; DNA passes through its center. Replication factor C (RFC) is required to load the toroid on the DNA. This subunit interacts with DNA polymerase I (dpo1). The heterotrimer also interacts with flap endonuclease 1, DNA ligase and XPF via the other subunits.

One of the sliding clamp subunits that acts as a moving platform for DNA processing. Responsible for tethering the catalytic subunit of DNA polymerase to DNA during high-speed replication. Heterotrimer stimulates the Holliday junction resolvase Hjc. DNA polymerase I, DNA ligase and the flap endonuclease may be constitutively associated with the PCNA heterotrimer forming a scanning complex able to couple DNA synthesis and Okazaki fragment maturation. This Saccharolobus solfataricus (strain ATCC 35092 / DSM 1617 / JCM 11322 / P2) (Sulfolobus solfataricus) protein is DNA polymerase sliding clamp 2.